Here is a 397-residue protein sequence, read N- to C-terminus: 4-O-methyl-glucuronoyl methylesterase (397 aa).

A signal peptide spans 1-18; the sequence is MVHLTSALLVAGAAFAAA. Disulfide bonds link cysteine 31–cysteine 65, cysteine 212–cysteine 347, and cysteine 244–cysteine 319. The GXSYXG catalytic site motif signature appears at 211-216; that stretch reads GCSRNG. Residue serine 213 is the Nucleophile of the active site. Positions 217, 259, 267, and 310 each coordinate substrate. Histidine 346 acts as the Proton donor/acceptor in catalysis.

The protein belongs to the carbohydrate esterase 15 (CE15) family.

It is found in the secreted. The enzyme catalyses a 4-O-methyl-alpha-D-glucuronosyl ester derivative + H2O = 4-O-methyl-alpha-D-glucuronate derivative + an alcohol + H(+). Functionally, glucuronoyl esterase which may play a significant role in biomass degradation, as it is considered to disconnect hemicellulose from lignin through the hydrolysis of the ester bond between 4-O-methyl-D-glucuronic acid residues of glucuronoxylans and aromatic alcohols of lignin. The polypeptide is 4-O-methyl-glucuronoyl methylesterase (ge2) (Thermothelomyces thermophilus (strain ATCC 42464 / BCRC 31852 / DSM 1799) (Sporotrichum thermophile)).